The sequence spans 778 residues: Ent-trachylobane synthase KSL2, chloroplastic (778 aa).

Residues 1-37 (MLLTCTNSLKISSQAKEWESKTLTGMSLEQLNKRIRI) constitute a chloroplast transit peptide. Mg(2+) contacts are provided by Asp529, Asp533, Asn672, Asp673, and Asp680. The short motif at 529-533 (DDFFD) is the DDXXD motif element.

It belongs to the terpene synthase family. Mg(2+) is required as a cofactor.

It is found in the plastid. It localises to the chloroplast. The catalysed reaction is ent-copalyl diphosphate = ent-trachylobane + diphosphate. The enzyme catalyses ent-copalyl diphosphate = ent-kaur-16-ene + diphosphate. Its pathway is secondary metabolite biosynthesis; terpenoid biosynthesis. Functionally, diterpene cyclase involved in the biosynthesis of labdane-related diterpenoids (LRDs) natural products. Catalyzes the cyclization of ent-CDP into ent-trachylobane as a major and ent-kaurene as a minor product. This chain is Ent-trachylobane synthase KSL2, chloroplastic, found in Ricinus communis (Castor bean).